A 68-amino-acid chain; its full sequence is Small cysteine-rich protein 2 (68 aa).

The signal sequence occupies residues 1 to 24 (MAVKFHLCLLLIILVGMGAHVAFA).

This sequence belongs to the Cnidaria small cysteine-rich protein (SCRiP) family. gamma subfamily. In terms of processing, contains 4 disulfide bonds.

It localises to the secreted. The protein resides in the nematocyst. Its function is as follows. Induces neurotoxic symptoms on zebrafish. Has also been claimed to be implied in calcification, but tests on homolog proteins suggest that proteins of this family have a neurotoxic function and not a calcification function. In Orbicella faveolata (Mountainous star coral), this protein is Small cysteine-rich protein 2.